A 309-amino-acid chain; its full sequence is Porphobilinogen deaminase (309 aa).

C242 carries the post-translational modification S-(dipyrrolylmethanemethyl)cysteine.

The protein belongs to the HMBS family. In terms of assembly, monomer. Dipyrromethane serves as cofactor.

It carries out the reaction 4 porphobilinogen + H2O = hydroxymethylbilane + 4 NH4(+). Its pathway is porphyrin-containing compound metabolism; protoporphyrin-IX biosynthesis; coproporphyrinogen-III from 5-aminolevulinate: step 2/4. Its function is as follows. Tetrapolymerization of the monopyrrole PBG into the hydroxymethylbilane pre-uroporphyrinogen in several discrete steps. This Shewanella frigidimarina (strain NCIMB 400) protein is Porphobilinogen deaminase.